Here is a 670-residue protein sequence, read N- to C-terminus: Proline-rich receptor-like protein kinase PERK5 (670 aa).

The interval 1-181 (MADSPVDSSP…SGDSDSSSGN (181 aa)) is disordered. Topologically, residues 1–186 (MADSPVDSSP…SSSGNHPQAN (186 aa)) are extracellular. A compositionally biased stretch (low complexity) spans 14 to 31 (TSNGTPPSNGTSPSNESS). Residues asparagine 22 and asparagine 28 are each glycosylated (N-linked (GlcNAc...) asparagine). Pro residues-rich tracts occupy residues 32–62 (PPTP…PAPP) and 84–109 (PQTP…PPQT). Residue asparagine 130 is glycosylated (N-linked (GlcNAc...) asparagine). Low complexity predominate over residues 132–141 (TNGGNNNRDG). N-linked (GlcNAc...) asparagine glycosylation is present at asparagine 151. Positions 167–181 (SPPQNSGDSDSSSGN) are enriched in low complexity. The helical transmembrane segment at 187–207 (IGLIIGVLVGAGLLLLLAVCI) threads the bilayer. At 208–670 (CICCNRKKKK…RGSMKRNPQL (463 aa)) the chain is on the cytoplasmic side. Position 301 is a phosphothreonine (threonine 301). The Protein kinase domain occupies 312–590 (FAQSNLLGQG…VRALEGDMSM (279 aa)). ATP is bound by residues 318-326 (LGQGGFGYV) and lysine 340. A Phosphotyrosine modification is found at tyrosine 385. Aspartate 436 functions as the Proton acceptor in the catalytic mechanism. Serine 469 carries the post-translational modification Phosphoserine. Threonine 470 and threonine 475 each carry phosphothreonine. The residue at position 483 (tyrosine 483) is a Phosphotyrosine. Disordered stretches follow at residues 589-613 (SMDD…VSSE) and 635-670 (EYQS…NPQL). Residues 599–613 (PGQSTYLSPGSVSSE) show a composition bias toward polar residues.

This sequence belongs to the protein kinase superfamily. Ser/Thr protein kinase family. In terms of tissue distribution, mostly expressed in flower buds.

The protein resides in the cell membrane. The catalysed reaction is L-seryl-[protein] + ATP = O-phospho-L-seryl-[protein] + ADP + H(+). It catalyses the reaction L-threonyl-[protein] + ATP = O-phospho-L-threonyl-[protein] + ADP + H(+). The chain is Proline-rich receptor-like protein kinase PERK5 (PERK5) from Arabidopsis thaliana (Mouse-ear cress).